The chain runs to 206 residues: MARYIGPTCKLARREGTDLFLKSGVRPLDSKCKLDQPPGPKLQRRTRMSDYGLQLREKQKVRRMYGVLERQFRNYYKEAARQKGATGTVLLQLLESRLDNVVYRMGFATTRAEARQLVSHRGVQVNGRVVNVPSMQVSPGDLVGLKEKAQKQLRVQAALEMAQQNGWPAWVEVDPKKFEGTYKARPDRADLSAEINESLIVELYSK.

The S4 RNA-binding domain maps to 96–157 (SRLDNVVYRM…KAQKQLRVQA (62 aa)).

This sequence belongs to the universal ribosomal protein uS4 family. Part of the 30S ribosomal subunit. Contacts protein S5. The interaction surface between S4 and S5 is involved in control of translational fidelity.

One of the primary rRNA binding proteins, it binds directly to 16S rRNA where it nucleates assembly of the body of the 30S subunit. Its function is as follows. With S5 and S12 plays an important role in translational accuracy. The chain is Small ribosomal subunit protein uS4 from Alkalilimnicola ehrlichii (strain ATCC BAA-1101 / DSM 17681 / MLHE-1).